Here is a 135-residue protein sequence, read N- to C-terminus: uncharacterized protein (135 aa).

Residues 100–125 (KESPATSSEDISSCSDCDSERLQSDD) are disordered. Residues 106–115 (SSEDISSCSD) are compositionally biased toward low complexity.

This is an uncharacterized protein from Microplitis demolitor (Parasitoid wasp).